A 726-amino-acid chain; its full sequence is F-box protein COS111 (726 aa).

Residues 143–194 (FADINCLPEEIICRIIANLNDADSQRNCLLVSQEWSECAKRIIYKDVKFTST) form the F-box domain. The disordered stretch occupies residues 276-295 (RSRTRRSSDASSMNSSVFSH). Residues 284–295 (DASSMNSSVFSH) are compositionally biased toward low complexity.

Its function is as follows. F-box protein probably involved in ubiquitin conjugation pathway. This chain is F-box protein COS111 (COS111), found in Kluyveromyces lactis (strain ATCC 8585 / CBS 2359 / DSM 70799 / NBRC 1267 / NRRL Y-1140 / WM37) (Yeast).